The primary structure comprises 361 residues: MALTRLLIKDFRNIESADLALAAGFNFLVGPNGSGKTSVLEAVYTLGHGRAFRSLQAGRVIRHECAEFVLHGRVDANEREASVGLSKSRQGDTKVRIDGTDGHKVAELAQMLPMQLITPEGFTLLNGGPKFRRAFLDWGCFHNEPGFFTAWSNLKRLLKQRNAALRQVSRYTQIRAWDQEIIPLAERISEWRAAYSDAIAADISATCALFLPEFALSFSFQRGWDKESDYGELLARQFERDRALTYTAVGPHKADFRIRADGTPVEDLLSRGQLKLLMCALRLAQGEFLTRQSGRRCLYLLDDFASELDTGRRRLLAERLKATQAQVFVSAVSAEQVADMVGEKGKMFRVEHGKIEVQPQD.

30-37 (GPNGSGKT) lines the ATP pocket.

It belongs to the RecF family.

It localises to the cytoplasm. Functionally, the RecF protein is involved in DNA metabolism; it is required for DNA replication and normal SOS inducibility. RecF binds preferentially to single-stranded, linear DNA. It also seems to bind ATP. This is DNA replication and repair protein RecF from Yersinia pestis.